The sequence spans 330 residues: tRNA U34 carboxymethyltransferase (330 aa).

Carboxy-S-adenosyl-L-methionine is bound by residues lysine 91, tryptophan 105, lysine 110, glycine 130, 152-154 (DPS), 181-182 (IE), methionine 196, tyrosine 200, and arginine 315.

Belongs to the class I-like SAM-binding methyltransferase superfamily. CmoB family. As to quaternary structure, homotetramer.

The catalysed reaction is carboxy-S-adenosyl-L-methionine + 5-hydroxyuridine(34) in tRNA = 5-carboxymethoxyuridine(34) in tRNA + S-adenosyl-L-homocysteine + H(+). Catalyzes carboxymethyl transfer from carboxy-S-adenosyl-L-methionine (Cx-SAM) to 5-hydroxyuridine (ho5U) to form 5-carboxymethoxyuridine (cmo5U) at position 34 in tRNAs. The chain is tRNA U34 carboxymethyltransferase from Shewanella amazonensis (strain ATCC BAA-1098 / SB2B).